An 837-amino-acid chain; its full sequence is Tuftelin-interacting protein 11 (837 aa).

Composition is skewed to basic and acidic residues over residues 1-13 (MSLS…GEGR) and 53-64 (VWAERDSDDERP). Disordered stretches follow at residues 1-21 (MSLS…DDER), 53-72 (VWAE…KRAR), and 85-133 (LKKG…KGFA). The segment at 1–50 (MSLSHLYRDGEGRIDDDDDERENFEITDWDLQNEFNPNRQRHWQTKEEAT) is required for interaction with DHX15. Phosphoserine occurs at positions 2, 59, and 98. Acidic residues predominate over residues 91–102 (EEAELEDSDDEE). A compositionally biased stretch (basic and acidic residues) spans 103–116 (RPVKQDDFPKDFGP). Ser-144 is subject to Phosphoserine. Residues 149–195 (TKGIGQKLLQKMGYVPGRGLGKNAQGIINPIEAKQRKGKGAVGAYGS) enclose the G-patch domain. A disordered region spans residues 179 to 236 (IEAKQRKGKGAVGAYGSERTTQSMQDFPVVDSEEEAEEEFQKELSQWRKDPSGSKKKP). A Phosphoserine modification is found at Ser-210. The segment covering 217–231 (EFQKELSQWRKDPSG) has biased composition (basic and acidic residues). The Nuclear localization signal signature appears at 700–705 (VKDKFN). Residues 710 to 734 (IMNRAVSSNVGAYMQPGARENIAYL) form a required for nuclear speckle localization region.

It belongs to the TFP11/STIP family. Identified in the spliceosome C complex. Found in the Intron Large (IL) complex, a post-mRNA release spliceosomal complex containing the excised intron, U2, U5 and U6 snRNPs, and splicing factors. Interacts with TUFT1. Interacts with DHX15; indicative for a recruitment of DHX15 to the IL complex. Interacts with GCFC2.

It localises to the cytoplasm. Its subcellular location is the nucleus. Its function is as follows. Involved in pre-mRNA splicing, specifically in spliceosome disassembly during late-stage splicing events. Intron turnover seems to proceed through reactions in two lariat-intron associated complexes termed Intron Large (IL) and Intron Small (IS). In cooperation with DHX15 seems to mediate the transition of the U2, U5 and U6 snRNP-containing IL complex to the snRNP-free IS complex leading to efficient debranching and turnover of excised introns. May play a role in the differentiation of ameloblasts and odontoblasts or in the forming of the enamel extracellular matrix. The polypeptide is Tuftelin-interacting protein 11 (TFIP11) (Macaca mulatta (Rhesus macaque)).